The chain runs to 687 residues: MLASNSDGASTSVKPSDDAVNTVTPWSILLTNNKPMSGSENTLNNESHEMSQILKKSGLCYDPRMRFHATLSEVDDHPEDPRRVLRVFEAIKKAGYVSNVPSPSDVFLRIPAREATLEELLQVHSQEMYDRVTNTEKMSHEDLANLEKISDSLYYNNESAFCARLACGSAIETCTAVVTGQVKNAFAVVRPPGHHAEPHKPGGFCLFNNVSVTARSMLQRFPDKIKRVLIVDWDIHHGNGTQMAFYDDPNVLYVSLHRYENGRFYPGTNYGCAENCGEGPGLGRTVNIPWSCAGMGDGDYIYAFQRVVMPVAYEFDPDLVIVSCGFDAAAGDHIGQFLLTPAAYAHMTQMLMGLADGKVFISLEGGYNLDSISTSALAVAQSLLGIPPGRLHTTYACPQAVATINHVTKIQSQYWRCMRPKHFDANPKDAHVDRLHDVIRTYQAKKLFEDWKITNMPILRDSVSNVFNNQVLCSSNFFQKDNLLVIVHESPRVLGNGTSETNVLNLNDSLLVDPVSLYVEWAMQQDWGLIDINIPEVVTDGENAPVDILSEVKELCLYVWDNYVELSISKNIFFIGGGKAVHGLVNLASSRNVSDRVKCMVNFLGTEPLVGLKTASEEDLPTWYYRHSLVFVSSSNECWKKAKRAKRRYGRLMQSEHTETSDMMEQHYRAVTQYLLHLLQKARPTSQ.

Residues 55–385 (KKSGLCYDPR…ALAVAQSLLG (331 aa)) are histone deacetylase. The active site involves His-195.

It belongs to the histone deacetylase family. HD type 2 subfamily. As to quaternary structure, interacts with ccq1, clr1, clr2 and mit1.

It localises to the nucleus. It is found in the chromosome. Its subcellular location is the centromere. The protein resides in the telomere. The catalysed reaction is N(6)-acetyl-L-lysyl-[histone] + H2O = L-lysyl-[histone] + acetate. Its function is as follows. Responsible for the deacetylation of lysine residues on the N-terminal part of the core histones (H2A, H2B, H3 and H4). Histone deacetylation gives a tag for epigenetic repression and plays an important role in transcriptional regulation, cell cycle progression and developmental events. Histone deacetylases act via the formation of large multiprotein complexes. Required for proper positioning of nucleosomes at heterochromatic loci and for transcriptional gene silencing (TGS) function of the Snf2/Hdac-containing repressor complex (SHREC). The sequence is that of Histone deacetylase clr3 (clr3) from Schizosaccharomyces pombe (strain 972 / ATCC 24843) (Fission yeast).